Here is a 175-residue protein sequence, read N- to C-terminus: Vitamin K epoxide reductase complex subunit 1-like protein 1 (175 aa).

Over 1–12 (MAAPVLRVSTPR) the chain is Cytoplasmic. A helical transmembrane segment spans residues 13 to 35 (WERIARVLVCLLGILLSLYAFHV). The Lumenal portion of the chain corresponds to 36-86 (EREHARDPSYKALCDVSSSISCSKVFGSRWGRGFGLLGSIFGNDSALNQPN). Cys-49 and Cys-57 are joined by a disulfide. Asn-86 serves as a coordination point for (S)-warfarin. The chain crosses the membrane as a helical span at residues 87–101 (SVYGIVFYAFQLLLG). Residues 102–106 (MTVSA) lie on the Cytoplasmic side of the membrane. A helical transmembrane segment spans residues 107–134 (MAALILMTTSIMSVVGSLYLGYILYFVL). Residues 135-137 (KDL) lie on the Lumenal side of the membrane. Cys-138 and Cys-141 are disulfide-bonded. The helical transmembrane segment at 138–159 (CVICVTTYALNFILFVLNYKRL) threads the bilayer. Phylloquinone-binding residues include Cys-141 and Tyr-145. Tyr-145 lines the (S)-warfarin pocket. Over 160–175 (VYLNEAWKQKLQAKQD) the chain is Cytoplasmic.

Belongs to the VKOR family.

The protein localises to the endoplasmic reticulum membrane. It carries out the reaction phylloquinone + [protein]-disulfide + H2O = 2,3-epoxyphylloquinone + [protein]-dithiol. The enzyme catalyses phylloquinol + [protein]-disulfide = phylloquinone + [protein]-dithiol. Its activity is regulated as follows. Inhibited by warfarin (coumadin). Warfarin locks VKORC1 in both redox states into the closed conformation. In terms of biological role, involved in vitamin K metabolism. Can reduce inactive vitamin K 2,3-epoxide to active vitamin K, and may contribute to vitamin K-mediated protection against oxidative stress. Plays a role in vitamin K-dependent gamma-carboxylation of Glu residues in target proteins. The sequence is that of Vitamin K epoxide reductase complex subunit 1-like protein 1 (vkorc1l1) from Takifugu rubripes (Japanese pufferfish).